The chain runs to 359 residues: 3-dehydroquinate synthase (359 aa).

Residues 71–76 (DGEQYK), 105–109 (GVIGD), 129–130 (TT), Lys-142, Lys-151, and 169–172 (CLKT) contribute to the NAD(+) site. Residues Glu-184, His-247, and His-264 each contribute to the Zn(2+) site.

Belongs to the sugar phosphate cyclases superfamily. Dehydroquinate synthase family. Co(2+) is required as a cofactor. Zn(2+) serves as cofactor. The cofactor is NAD(+).

It is found in the cytoplasm. The enzyme catalyses 7-phospho-2-dehydro-3-deoxy-D-arabino-heptonate = 3-dehydroquinate + phosphate. It participates in metabolic intermediate biosynthesis; chorismate biosynthesis; chorismate from D-erythrose 4-phosphate and phosphoenolpyruvate: step 2/7. Functionally, catalyzes the conversion of 3-deoxy-D-arabino-heptulosonate 7-phosphate (DAHP) to dehydroquinate (DHQ). This Shewanella amazonensis (strain ATCC BAA-1098 / SB2B) protein is 3-dehydroquinate synthase.